The following is a 386-amino-acid chain: Magnesium transporter MRS2-7 (386 aa).

2 helical membrane passes run 321–341 and 355–375; these read LMLS…GIFG and IFKW…VIIL. The Required for magnesium transport activity motif lies at 341 to 343; it reads GMN.

Belongs to the CorA metal ion transporter (MIT) (TC 1.A.35.5) family. Isoform 1 is expressed in the whole plant. Isoform 4 is expressed only in roots and flowers.

Its subcellular location is the endoplasmic reticulum membrane. Low-affinity magnesium transporter that mediates the influx of magnesium. The protein is Magnesium transporter MRS2-7 (MRS2-7) of Arabidopsis thaliana (Mouse-ear cress).